The following is a 427-amino-acid chain: Tryptophan synthase beta chain 1 (427 aa).

Position 107 is an N6-(pyridoxal phosphate)lysine (lysine 107).

The protein belongs to the TrpB family. In terms of assembly, tetramer of two alpha and two beta chains. Pyridoxal 5'-phosphate serves as cofactor.

The catalysed reaction is (1S,2R)-1-C-(indol-3-yl)glycerol 3-phosphate + L-serine = D-glyceraldehyde 3-phosphate + L-tryptophan + H2O. The protein operates within amino-acid biosynthesis; L-tryptophan biosynthesis; L-tryptophan from chorismate: step 5/5. In terms of biological role, the beta subunit is responsible for the synthesis of L-tryptophan from indole and L-serine. This Aeropyrum pernix (strain ATCC 700893 / DSM 11879 / JCM 9820 / NBRC 100138 / K1) protein is Tryptophan synthase beta chain 1 (trpB1).